We begin with the raw amino-acid sequence, 75 residues long: Small ribosomal subunit protein bS18 (75 aa).

It belongs to the bacterial ribosomal protein bS18 family. In terms of assembly, part of the 30S ribosomal subunit. Forms a tight heterodimer with protein bS6.

Binds as a heterodimer with protein bS6 to the central domain of the 16S rRNA, where it helps stabilize the platform of the 30S subunit. In Vibrio atlanticus (strain LGP32) (Vibrio splendidus (strain Mel32)), this protein is Small ribosomal subunit protein bS18.